The primary structure comprises 676 residues: Potassium-transporting ATPase ATP-binding subunit (676 aa).

The next 4 helical transmembrane spans lie at 24-44 (NPVMFVVYLGALITTILCFYP), 45-65 (MGIPLWFNISITIFLWLTLLF), 212-232 (IFLITLTIIFLTVSITLVPFT), and 246-266 (SLVIVIALLICLAPTTIGALI). The active-site 4-aspartylphosphate intermediate is the D302. Residues D339, E343, 372–379 (FSAKTRMS), and K390 each bind ATP. 2 residues coordinate Mg(2+): D513 and D517. The next 3 membrane-spanning stretches (helical) occupy residues 573–593 (FSIANDIAKYFAVIPVLFYSI), 611–631 (AILSAVIYNAVVIVALIPLAL), and 656–676 (GIIAPFIFIKIIDLILSLIIL).

Belongs to the cation transport ATPase (P-type) (TC 3.A.3) family. Type IA subfamily. The system is composed of three essential subunits: KdpA, KdpB and KdpC.

It is found in the cell membrane. The catalysed reaction is K(+)(out) + ATP + H2O = K(+)(in) + ADP + phosphate + H(+). Its function is as follows. Part of the high-affinity ATP-driven potassium transport (or Kdp) system, which catalyzes the hydrolysis of ATP coupled with the electrogenic transport of potassium into the cytoplasm. This subunit is responsible for energy coupling to the transport system and for the release of the potassium ions to the cytoplasm. This is Potassium-transporting ATPase ATP-binding subunit from Enterococcus faecalis (strain ATCC 700802 / V583).